We begin with the raw amino-acid sequence, 1786 residues long: Laminin subunit beta-1 (1786 aa).

Positions 1 to 21 are cleaved as a signal peptide; it reads MGLLQVFAFGVLALWGTRVCA. A Laminin N-terminal domain is found at 31–270; that stretch reads AEGSCYPATG…AVYDMVVRGN (240 aa). N-linked (GlcNAc...) asparagine glycosylation is present at asparagine 120. The residue at position 250 (serine 250) is a Phosphoserine. 19 cysteine pairs are disulfide-bonded: cysteine 271-cysteine 280, cysteine 273-cysteine 298, cysteine 300-cysteine 309, cysteine 312-cysteine 332, cysteine 335-cysteine 344, cysteine 337-cysteine 362, cysteine 365-cysteine 374, cysteine 377-cysteine 395, cysteine 398-cysteine 411, cysteine 400-cysteine 426, cysteine 428-cysteine 437, cysteine 440-cysteine 455, cysteine 458-cysteine 472, cysteine 460-cysteine 479, cysteine 481-cysteine 490, cysteine 493-cysteine 507, cysteine 510-cysteine 522, cysteine 512-cysteine 529, and cysteine 531-cysteine 540. 4 Laminin EGF-like domains span residues 271–334, 335–397, 398–457, and 458–509; these read CFCY…ACKK, CNCN…LCEP, CTCD…GCKS, and CACN…GCRP. The N-linked (GlcNAc...) asparagine glycan is linked to asparagine 356. Residues 510–540 form the Laminin EGF-like 5; truncated domain; it reads CDCDLGGALNNSCSEDSGQCSCLPHMIGRQC. N-linked (GlcNAc...) asparagine glycosylation occurs at asparagine 519. The Laminin IV type B domain occupies 549-767; the sequence is FTTLDHYIYE…IIFSISALIH (219 aa). Asparagine 677 is a glycosylation site (N-linked (GlcNAc...) asparagine). 32 disulfide bridges follow: cysteine 773/cysteine 785, cysteine 775/cysteine 792, cysteine 794/cysteine 803, cysteine 806/cysteine 818, cysteine 821/cysteine 833, cysteine 823/cysteine 840, cysteine 842/cysteine 851, cysteine 854/cysteine 864, cysteine 867/cysteine 876, cysteine 869/cysteine 883, cysteine 886/cysteine 895, cysteine 898/cysteine 914, cysteine 917/cysteine 933, cysteine 919/cysteine 944, cysteine 946/cysteine 955, cysteine 958/cysteine 973, cysteine 976/cysteine 990, cysteine 978/cysteine 997, cysteine 1000/cysteine 1009, cysteine 1012/cysteine 1025, cysteine 1028/cysteine 1040, cysteine 1030/cysteine 1054, cysteine 1056/cysteine 1065, cysteine 1068/cysteine 1081, cysteine 1084/cysteine 1096, cysteine 1086/cysteine 1103, cysteine 1105/cysteine 1114, cysteine 1117/cysteine 1129, cysteine 1132/cysteine 1144, cysteine 1134/cysteine 1151, cysteine 1153/cysteine 1162, and cysteine 1165/cysteine 1176. Laminin EGF-like domains lie at 773–820, 821–866, 867–916, 917–975, 976–1027, 1028–1083, 1084–1131, and 1132–1178; these read CECD…GCKP, CDCH…SCQP, CQCN…HCRP, CPCP…SCQP, CQCH…DCRK, CVCN…GCGP, CNCN…ECRA, and CDCD…DCTP. N-linked (GlcNAc...) asparagine glycosylation is present at asparagine 1041. A domain II region spans residues 1179–1397; the sequence is CHQCFALWDA…LDLSAVAQMT (219 aa). Asparagine 1195, asparagine 1279, asparagine 1336, and asparagine 1343 each carry an N-linked (GlcNAc...) asparagine glycan. The stretch at 1216–1315 forms a coiled coil; the sequence is YRETVDSVEK…LEFIKNSDIQ (100 aa). The stretch at 1368-1388 forms a coiled coil; that stretch reads KEQQEEQARLLDELAGKLQSL. The domain alpha stretch occupies residues 1398–1430; sequence CGTPPGADCSESECGGPNCRTDEGEKKCGGPGC. The tract at residues 1431 to 1786 is domain I; it reads GGLVTVAHSA…EKVAVYSTCL (356 aa). Positions 1448 to 1778 form a coiled coil; it reads DRDVLSALAE…RSLLKDISEK (331 aa). Residue asparagine 1487 is glycosylated (N-linked (GlcNAc...) asparagine). Serine 1496 carries the post-translational modification Phosphoserine. N-linked (GlcNAc...) asparagine glycosylation is found at asparagine 1542 and asparagine 1643. Serine 1666 is subject to Phosphoserine.

As to quaternary structure, laminin is a complex glycoprotein, consisting of three different polypeptide chains (alpha, beta, gamma), which are bound to each other by disulfide bonds into a cross-shaped molecule comprising one long and three short arms with globules at each end. Beta-1 is a subunit of laminin-1 (laminin-111 or EHS laminin), laminin-2 (laminin-211 or merosin), laminin-6 (laminin-311 or K-laminin), laminin-8 (laminin-411), laminin-10 (laminin-511) and laminin-12 (laminin-213). Interacts with ITGB1. Widely expressed in the embryo. High levels are detected in the cerebellar basement membrane, at postnatal day 7.

Its subcellular location is the secreted. It localises to the extracellular space. It is found in the extracellular matrix. The protein localises to the basement membrane. In terms of biological role, binding to cells via a high affinity receptor, laminin is thought to mediate the attachment, migration and organization of cells into tissues during embryonic development by interacting with other extracellular matrix components. Involved in the organization of the laminar architecture of the cerebral cortex. It is probably required for the integrity of the basement membrane/glia limitans that serves as an anchor point for the endfeet of radial glial cells and as a physical barrier to migrating neurons. Radial glial cells play a central role in cerebral cortical development, where they act both as the proliferative unit of the cerebral cortex and a scaffold for neurons migrating toward the pial surface. The polypeptide is Laminin subunit beta-1 (Lamb1) (Mus musculus (Mouse)).